A 235-amino-acid chain; its full sequence is MNSATTMSASVLNYQILKFFPPQKNGFLKSPLIRGKICRFCVSASSNELNKQVIEDPKEETQEKSDGVIVNSTEEEEERSGENSTSTGPSTVLDNKELKKAVLKTASTFAPRASTATKNPAKPGTVLYTVFEVQAYASMLIGGALSFNLIFPSTEPDIWRLMGMWSIWMFTIPSLRARDCSKDEKEALNYLFLLVPLLNVAIPFFLKSFAVVWSADTVAFLGMYAWKLGWLQKER.

The N-terminal 43 residues, 1–43 (MNSATTMSASVLNYQILKFFPPQKNGFLKSPLIRGKICRFCVS), are a transit peptide targeting the chloroplast. The span at 53 to 66 (VIEDPKEETQEKSD) shows a compositional bias: basic and acidic residues. The disordered stretch occupies residues 53–92 (VIEDPKEETQEKSDGVIVNSTEEEEERSGENSTSTGPSTV). 4 helical membrane passes run 131 to 151 (FEVQ…NLIF), 158 to 178 (IWRL…LRAR), 188 to 208 (LNYL…FLKS), and 211 to 231 (VVWS…LGWL).

Its subcellular location is the plastid. It localises to the chloroplast. The protein resides in the membrane. In terms of biological role, plays a positive role in the immune response to the oomycetes P.infestans, including induced oxidative burst and enhanced expression of defense-related genes. The chain is Protein RESISTANCE TO PHYTOPHTHORA 1, chloroplastic from Solanum tuberosum (Potato).